A 667-amino-acid polypeptide reads, in one-letter code: MYGMLYESVQHYVQEEYGVDIWRKVCHIIDCKHNSFKTHQIYPDKLMPDIAEALSACTGESFDFCMNFFGRCFVRFFSNFGYDKMIRSTGRYFCDFLQSIDNIHLIMRFTYPKMKSPSMQLTNMDDNGAVILYRSSRTGMSKYLIGQMTEVAREFYGLEIKAYVIESQNDISGGTAGPIKLTDGPLTVIVKYRLDFDNREYMAKRVNTEAHPSQLKMPTVKLDVFLDLFPFTFVLNHDMKITHAGEKIVETWIMHNPGANPKSFIGTHVMDLFQCRRPKDTTIDWDTLIQMRAVLFEFELIRTGHNRAAYDAVLNMDFENYDEMDLNEAQTMALAKAQEFSESHPVDDDESAREDEIDPATGERRSSQGLRSILLKGQMFYIKDVDSLIFLCSPLIENLDELHGIGLYLNDLNPHGLSRELVMAGWQHCSKLEIMFEKEEQRSDELEKSLELADSWKRQGDELLYSMIPRPIAERMRLSEEQVCQSFEEVSVIFLEVMNVYDEGLNSIQGAMQTVNTLNKVFSALDEEIISPFVYKVETVGMVYMAVSGAPDVNPLHAEHACDLALRVMKKFKAHDMGDVAIRVGINSGPVVAGVVGQKVPRYCLFGDTVNTASRMESSSDPWKIQLSKYTGDKVRQVGYKVESRGTVQVKGKGDMETYWLLEGPEG.

Histidine 104 is a heme binding site. A disordered region spans residues 337-364 (AQEFSESHPVDDDESAREDEIDPATGER). Acidic residues predominate over residues 347–358 (DDDESAREDEID). Residues 427 to 455 (QHCSKLEIMFEKEEQRSDELEKSLELADS) are a coiled coil. The Guanylate cyclase domain maps to 491–617 (SVIFLEVMNV…DTVNTASRME (127 aa)).

It belongs to the adenylyl cyclase class-4/guanylyl cyclase family. In terms of assembly, heterodimer; with Gyc88E, in the presence of magnesium or manganese. Requires heme as cofactor.

It is found in the cytoplasm. It carries out the reaction GTP = 3',5'-cyclic GMP + diphosphate. Probably not activated by nitric oxide (NO). Heterodimer also exhibits some stimulation, some compounds (SIN-1 and two of the NONOates) that were ineffective at stimulating Gyc-88E alone did stimulate the heterodimer. Heterodimers with Gyc-89Da and Gyc-89Db are activated in response to changing oxygen concentrations, alerting flies to hypoxic environments. Under normal oxygen concentrations, oxygen binds to the heme group and results in low levels of guanylyl cyclase activity. When exposed to reduced oxygen concentrations, the oxygen dissociates from the heme group resulting in activation of the enzyme. The protein is Soluble guanylate cyclase 89Da of Drosophila melanogaster (Fruit fly).